Consider the following 218-residue polypeptide: MSAPQRRLPVYKKILEENKKKWMIKEFLEYRLSKYGYIDSEILKTPLGTRIVIYAERPSRIIGRKGAIVKEISNILTTKLGVENPQIDVIDISKIEAPEMFPKVVAYRIANAMAKGVRFRRVMFVAIRQLMEAGAKGFEIVVSGKLSTERARFEKQTYGKLYKIGYDAKNRVRRAVVHVLLKPGIYGIEVRIAPATLQYSDEYKIKPPVRPEAVQQQS.

In terms of domain architecture, KH type-2 spans 2-71 (SAPQRRLPVY…IGRKGAIVKE (70 aa)).

It belongs to the universal ribosomal protein uS3 family. In terms of assembly, part of the 30S ribosomal subunit.

Binds the lower part of the 30S subunit head. The chain is Small ribosomal subunit protein uS3 from Pyrobaculum aerophilum (strain ATCC 51768 / DSM 7523 / JCM 9630 / CIP 104966 / NBRC 100827 / IM2).